Reading from the N-terminus, the 274-residue chain is Eukaryotic translation initiation factor 3 subunit G-2 (274 aa).

The RRM domain occupies 194-272 (SAVRISNLSE…LILCVEWSKP (79 aa)).

The protein belongs to the eIF-3 subunit G family. Component of the eukaryotic translation initiation factor 3 (eIF-3) complex. The eIF-3 complex interacts with pix.

Its subcellular location is the cytoplasm. Its function is as follows. RNA-binding component of the eukaryotic translation initiation factor 3 (eIF-3) complex, which is involved in protein synthesis of a specialized repertoire of mRNAs and, together with other initiation factors, stimulates binding of mRNA and methionyl-tRNAi to the 40S ribosome. The eIF-3 complex specifically targets and initiates translation of a subset of mRNAs involved in cell proliferation. This subunit can bind 18S rRNA. This is Eukaryotic translation initiation factor 3 subunit G-2 from Drosophila pseudoobscura pseudoobscura (Fruit fly).